Consider the following 414-residue polypeptide: Esterase FrsA (414 aa).

It belongs to the FrsA family.

The catalysed reaction is a carboxylic ester + H2O = an alcohol + a carboxylate + H(+). Functionally, catalyzes the hydrolysis of esters. The protein is Esterase FrsA of Shigella flexneri serotype 5b (strain 8401).